The primary structure comprises 330 residues: Free fatty acid receptor 2 (330 aa).

Residues 1–8 (MTPDWHSS) are Extracellular-facing. A helical membrane pass occupies residues 9–29 (LILTAYILIFLTGLPANLLAL). Over 30 to 43 (RAFMGRVRQPQPAP) the chain is Cytoplasmic. A helical transmembrane segment spans residues 44–64 (VHILLLNLTLADLLLLLLLPF). Topologically, residues 65-79 (RIVEAASNFRWYLPK) are extracellular. A helical membrane pass occupies residues 80-100 (IVCALTGFGFYSSIYCSTWLL). Residues 101–126 (AGISMERYLGVAFPVQYKLSRRPLYG) lie on the Cytoplasmic side of the membrane. A helical membrane pass occupies residues 127–147 (VIAALVAWIMSFGHCTIVIIV). Residues 148-184 (QYLNSTEQVGTENQITCYENFTQEQLDVVLPVRLELC) lie on the Extracellular side of the membrane. Residues N151 and N167 are each glycosylated (N-linked (GlcNAc...) asparagine). A helical membrane pass occupies residues 185-205 (LVLFFVPMAVTIFCYWRFVWI). Topologically, residues 206-219 (MLTQPHVGAQRRRR) are cytoplasmic. Residues 220–240 (AVGLAVVTLLNFLVCFGPYNM) form a helical membrane-spanning segment. Over 241–255 (SHLVGFYLRQSPSWR) the chain is Extracellular. The chain crosses the membrane as a helical span at residues 256–276 (VEAVVFSSLNASLDPLLFYFS). The Cytoplasmic segment spans residues 277-330 (SSVVRRAFGKGLLLIRNPASSMLGRGAKETVEGTKMDRGGSQAEGVQSSEFVTE). The tract at residues 306 to 330 (TVEGTKMDRGGSQAEGVQSSEFVTE) is disordered. The span at 320–330 (EGVQSSEFVTE) shows a compositional bias: polar residues.

This sequence belongs to the G-protein coupled receptor 1 family. Interacts with FCN1 (via Fibrinogen C-terminal domain). As to expression, highly expressed in hematopoietic tissues, such as spleen and bone marrow, with highest levels in a subset of immune cells, including monocytes or neutrophils. Expressed in adipose tissues with high expression in differentiating adipocytes. Expressed by intestinal endocrine cells.

The protein resides in the cell membrane. Functionally, g protein-coupled receptor that is activated by a major product of dietary fiber digestion, the short chain fatty acids (SCFAs), and that plays a role in the regulation of whole-body energy homeostasis and in intestinal immunity. In omnivorous mammals, the short chain fatty acids acetate, propionate and butyrate are produced primarily by the gut microbiome that metabolizes dietary fibers. SCFAs serve as a source of energy but also act as signaling molecules. That G protein-coupled receptor is probably coupled to the pertussis toxin-sensitive, G(i/o)-alpha family of G proteins but also to the Gq family. Its activation results in the formation of inositol 1,4,5-trisphosphate, the mobilization of intracellular calcium, the phosphorylation of the MAPK3/ERK1 and MAPK1/ERK2 kinases and the inhibition of intracellular cAMP accumulation. May play a role in glucose homeostasis by regulating the secretion of GLP-1, in response to short-chain fatty acids accumulating in the intestine. May also regulate the production of LEP/Leptin, a hormone acting on the central nervous system to inhibit food intake. Finally, may also regulate whole-body energy homeostasis through adipogenesis regulating both differentiation and lipid storage of adipocytes. In parallel to its role in energy homeostasis, may also mediate the activation of the inflammatory and immune responses by SCFA in the intestine, regulating the rapid production of chemokines and cytokines. May also play a role in the resolution of the inflammatory response and control chemotaxis in neutrophils. In addition to SCFAs, may also be activated by the extracellular lectin FCN1 in a process leading to activation of monocytes and inducing the secretion of interleukin-8/IL-8 in response to the presence of microbes. This chain is Free fatty acid receptor 2 (Ffar2), found in Mus musculus (Mouse).